The chain runs to 118 residues: Large ribosomal subunit protein bL20 (118 aa).

This sequence belongs to the bacterial ribosomal protein bL20 family.

Binds directly to 23S ribosomal RNA and is necessary for the in vitro assembly process of the 50S ribosomal subunit. It is not involved in the protein synthesizing functions of that subunit. The sequence is that of Large ribosomal subunit protein bL20 from Serratia proteamaculans (strain 568).